We begin with the raw amino-acid sequence, 341 residues long: Probable electron transfer flavoprotein subunit alpha, mitochondrial (341 aa).

285 to 313 is a binding site for FAD; it reads LYIAVGIDGAIQHLAGIKDSKVIAAINRD.

The protein belongs to the ETF alpha-subunit/FixB family. Heterodimer of an alpha and a beta subunit. FAD serves as cofactor.

It localises to the mitochondrion matrix. Its function is as follows. The electron transfer flavoprotein serves as a specific electron acceptor for several dehydrogenases, including five acyl-CoA dehydrogenases, glutaryl-CoA and sarcosine dehydrogenase. It transfers the electrons to the main mitochondrial respiratory chain via ETF-ubiquinone oxidoreductase (ETF dehydrogenase). The polypeptide is Probable electron transfer flavoprotein subunit alpha, mitochondrial (Schizosaccharomyces pombe (strain 972 / ATCC 24843) (Fission yeast)).